The chain runs to 375 residues: RNA exonuclease 4 (375 aa).

The segment at Lys-21–Phe-78 is disordered. Over residues Ser-25 to Ser-35 the composition is skewed to low complexity. Over residues Thr-53–Gly-64 the composition is skewed to basic and acidic residues. The 164-residue stretch at Asn-134–Glu-297 folds into the Exonuclease domain.

Belongs to the REXO4 family.

It localises to the nucleus. In terms of biological role, exoribonuclease involved in ribosome biosynthesis. Involved in the processing of ITS1, the internal transcribed spacer localized between the 18S and 5.8S rRNAs. The chain is RNA exonuclease 4 (REX4) from Mycosarcoma maydis (Corn smut fungus).